Here is a 796-residue protein sequence, read N- to C-terminus: Armadillo repeat-containing protein wrm-1 (796 aa).

The disordered stretch occupies residues 17 to 59 (NFNPMTPSTSRVSTPVRPSSTMSARQYSGSPFKAQPQNMEPSN). Residues 462–504 (ESIHCIVQLIGCSDVTIVELATGTLRNIGLHNKMNKAFMVQDG) form an ARM repeat.

As to quaternary structure, interacts (independently of ARM repeat) with nhr-25. Component of the beta-catenin-lit-1 complex (also called the lit-1/wrm-1 complex or the wrm-1/lit-1 kinase complex) at least composed of lit-1 and wrm-1. Interacts (via N-terminus) with lit-1; the interaction is direct and activates lit-1 kinase activity which leads to the phosphorylation of pop-1. This promotes pop-1 interaction with par-5 and translocation of pop-1 from the nucleus to the cytoplasm.

It is found in the cytoplasm. Its subcellular location is the cell cortex. It localises to the nucleus. In terms of biological role, antagonistic role in the Wnt signaling pathway that operates in embryogenesis. When located at the cortex it has been shown to inhibit Wnt signaling during asymmetric cell division but when relocated to the nucleus it shows positive regulation. Has a role in blastomere signaling during endoderm specification. Component of the beta-catenin-lit-1 complex which promotes phosphorylation, down-regulation and subcellular relocation of pop-1. Within the complex, activates lit-1-dependent kinase activity. Can substitute for bar-1 indicating functional redundancy. Appears to have a role in centrosome positioning and can activation transcription in yeast. Involved in the development of distal tip cells (DTC) by regulating the asymmetric distribution of cye-1 and cki-1 between the daughters of Z1.a and Z4.p cells. This Caenorhabditis elegans protein is Armadillo repeat-containing protein wrm-1.